Here is a 141-residue protein sequence, read N- to C-terminus: Transcriptional regulator MraZ (141 aa).

SpoVT-AbrB domains follow at residues 5-47 (EYNH…PNEE) and 75-118 (AADC…SKER).

The protein belongs to the MraZ family. Forms oligomers.

It is found in the cytoplasm. It localises to the nucleoid. The polypeptide is Transcriptional regulator MraZ (Lachnoclostridium phytofermentans (strain ATCC 700394 / DSM 18823 / ISDg) (Clostridium phytofermentans)).